Reading from the N-terminus, the 880-residue chain is MSVTEPPPRRRGRHSRARRFLTSLGATAALTAGMLGVPLATGTAHAEPAFNYAEALQKSMFFYEAQRSGKLPENNRVSWRGDSGLNDGADVGLDLTGGWYDAGDHVKFGFPMAFTATMLAWGAIESPEGYIRSGQMPYLKDNLRWVNDYFIKAHPSPNVLYVQVGDGDADHKWWGPAEVMPMERPSFKVDPSCPGSDVAAETAAAMAASSIVFADDDPAYAATLVQHAKQLYTFADTYRGVYSDCVPAGAFYNSWSGYQDELVWGAYWLYKATGDDSYLAKAEYEYDFLSTEQQTDLRSYRWTIAWDDKSYGTYVLLAKETGKQKYIDDANRWLDYWTVGVNGQRVPYSPGGMAVLDTWGALRYAANTAFVALVYAKVIDDPVRKQRYHDFAVRQINYALGDNPRNSSYVVGFGNNPPRNPHHRTAHGSWTDSIASPAENRHVLYGALVGGPGSPNDAYTDDRQDYVANEVATDYNAGFSSALAMLVEEYGGTPLADFPPTEEPDGPEIFVEAQINTPGTTFTEIKAMIRNQSGWPARMLDKGTFRYWFTLDEGVDPADITVSSAYNQCATPEDVHHVSGDLYYVEIDCTGEKIFPGGQSEHRREVQFRIAGGPGWDPSNDWSFQGIGNELAPAPYIVLYDDGVPVWGTAPEEGEEPGGGEGPGGGEEPGEDVTPPSAPGSPAVRDVTSTSAVLTWSASSDTGGSGVAGYDVFLRAGTGQEQKVGSTTRTSFTLTGLEPDTTYIAAVVARDNAGNVSQRSTVSFTTLAENGGGPDASCTVGYSTNDWDSGFTASIRITYHGTAPLSSWELSFTFPAGQQVTHGWNATWRQDGAAVTATPMSWNSSLAPGATVEVGFNGSWSGSNTPPTDFTLNGEPCALA.

An N-terminal signal peptide occupies residues Met-1–Ala-46. The active-site Nucleophile is the Asp-104. Active-site residues include His-422, His-427, Asp-461, and Glu-470. Residues Pro-504–Glu-652 form the CBM3 domain. The interval Trp-647–Thr-688 is disordered. The region spanning Ala-678 to Asn-770 is the Fibronectin type-III domain. Residues Gly-771–Ala-880 enclose the CBM2 domain.

It belongs to the glycosyl hydrolase 9 (cellulase E) family.

It carries out the reaction Endohydrolysis of (1-&gt;4)-beta-D-glucosidic linkages in cellulose, lichenin and cereal beta-D-glucans.. It participates in glycan metabolism; cellulose degradation. The protein is Endoglucanase E-4 (celD) of Thermobifida fusca (Thermomonospora fusca).